The sequence spans 333 residues: Probable endo-beta-1,4-glucanase B (333 aa).

A signal peptide spans 1–17 (MKFRNLFFAAVAGSAVA). Residues Asn-37 and Asn-100 are each glycosylated (N-linked (GlcNAc...) asparagine). Glu-160 acts as the Proton donor in catalysis. Glu-267 serves as the catalytic Nucleophile.

The protein belongs to the glycosyl hydrolase 5 (cellulase A) family.

It localises to the secreted. It carries out the reaction Endohydrolysis of (1-&gt;4)-beta-D-glucosidic linkages in cellulose, lichenin and cereal beta-D-glucans.. In terms of biological role, has endoglucanase activity on substrates containing beta-1,4 glycosidic bonds, like in carboxymethylcellulose (CMC), hydroxyethylcellulose (HEC) and beta-glucan. Involved in the degradation of complex natural cellulosic substrates. This chain is Probable endo-beta-1,4-glucanase B (eglB), found in Aspergillus oryzae (strain ATCC 42149 / RIB 40) (Yellow koji mold).